The primary structure comprises 210 residues: MECKERRLIGDLIALSYVEGLPVAEAAKRLCVTRQGLYKLLKQLRNEGYVAEGPLIKITQKGRDLLSSVLRDLLRYFNIASIRLIGRVISGLGEGAFYISLEGYRRAIEEKLGFTPFPGTLNIKLDPQYLPYRRYLDGLPGIVIPGFTNGLRTYGGVKAFKAKINGVEGAVVMPERTHHPTDVIEIIAPVKLRDALNLKDGDIVEVEILL.

Residues 1–81 form an H-T-H motif-like region; the sequence is MECKERRLIG…DLLRYFNIAS (81 aa). The riboflavin kinase stretch occupies residues 82 to 210; it reads IRLIGRVISG…GDIVEVEILL (129 aa). 91-96 is a binding site for CDP; it reads GLGEGA. Positions 120 and 122 each coordinate Mg(2+). Positions 177 and 185 each coordinate FMN. 190–193 provides a ligand contact to CDP; that stretch reads VKLR.

This sequence belongs to the archaeal riboflavin kinase family. The cofactor is Mg(2+).

The catalysed reaction is riboflavin + CTP = CDP + FMN + H(+). The protein operates within cofactor biosynthesis; FMN biosynthesis; FMN from riboflavin (CTP route): step 1/1. Functionally, catalyzes the CTP-dependent phosphorylation of riboflavin (vitamin B2) to form flavin mononucleotide (FMN). In Pyrobaculum aerophilum (strain ATCC 51768 / DSM 7523 / JCM 9630 / CIP 104966 / NBRC 100827 / IM2), this protein is Riboflavin kinase (ribK).